Here is a 238-residue protein sequence, read N- to C-terminus: Large ribosomal subunit protein uL2 (238 aa).

Over residues 1–11 the composition is skewed to polar residues; that stretch reads MGKRLISQNRG. 2 disordered regions span residues 1 to 22 and 202 to 223; these read MGKR…APSH and FGGG…APPG.

This sequence belongs to the universal ribosomal protein uL2 family. Part of the 50S ribosomal subunit. Forms a bridge to the 30S subunit in the 70S ribosome.

One of the primary rRNA binding proteins. Required for association of the 30S and 50S subunits to form the 70S ribosome, for tRNA binding and peptide bond formation. It has been suggested to have peptidyltransferase activity; this is somewhat controversial. Makes several contacts with the 16S rRNA in the 70S ribosome. The protein is Large ribosomal subunit protein uL2 of Methanosarcina mazei (strain ATCC BAA-159 / DSM 3647 / Goe1 / Go1 / JCM 11833 / OCM 88) (Methanosarcina frisia).